The chain runs to 142 residues: Large ribosomal subunit protein bL17 (142 aa).

This sequence belongs to the bacterial ribosomal protein bL17 family. As to quaternary structure, part of the 50S ribosomal subunit. Contacts protein L32.

The polypeptide is Large ribosomal subunit protein bL17 (Chlamydia pneumoniae (Chlamydophila pneumoniae)).